We begin with the raw amino-acid sequence, 153 residues long: Putative ubiquitin-conjugating enzyme E2 N-like (153 aa).

The UBC core domain maps to 3–150 (ELPHRIIKET…ARAWTRLYAM (148 aa)). Lys-83 is subject to N6-acetyllysine.

Belongs to the ubiquitin-conjugating enzyme family. In terms of tissue distribution, expressed in epididymis (at protein level).

The chain is Putative ubiquitin-conjugating enzyme E2 N-like (UBE2NL) from Homo sapiens (Human).